The sequence spans 928 residues: Nitrogen network kinase 1 (928 aa).

Positions Met1–Gly12 are enriched in polar residues. Disordered regions lie at residues Met1–Arg43 and His81–Gly118. The span at Ser13–Ser29 shows a compositional bias: low complexity. Polar residues-rich tracts occupy residues Pro30 to Ser40 and Arg86 to Asn107. 2 positions are modified to phosphoserine: Ser178 and Ser179. The segment at Ala374–Asn394 is disordered. Residues Asn375 to Thr391 show a composition bias toward low complexity. 2 positions are modified to phosphoserine: Ser405 and Ser426. Residues His449–Leu912 enclose the Protein kinase domain. Residues Ile455 to Ile463 and Lys478 contribute to the ATP site. Asp580 functions as the Proton acceptor in the catalytic mechanism. 2 disordered regions span residues Glu670–Gly741 and Tyr767–Ser813. Polar residues predominate over residues Val683 to Pro696. Position 737 is a phosphoserine (Ser737). The residue at position 739 (Tyr739) is a Phosphotyrosine. Low complexity predominate over residues Ser769–Ser813.

This sequence belongs to the protein kinase superfamily. Ser/Thr protein kinase family. As to quaternary structure, interacts with URE2 and GDH2. Also interacts with the TORC1 kinase complex.

The protein localises to the cytoplasm. The enzyme catalyses L-seryl-[protein] + ATP = O-phospho-L-seryl-[protein] + ADP + H(+). It catalyses the reaction L-threonyl-[protein] + ATP = O-phospho-L-threonyl-[protein] + ADP + H(+). Its function is as follows. Serine/threonine-protein kinase involved in the phosphorylation of the NAD(+)-dependent glutamate dehydrogenase GDH2. When overexpressed, confers hypersensitivity to rapamycin and induces rapid nuclear accumulation of GLN3 to activate the transcription of nitrogen-regulated genes. The protein is Nitrogen network kinase 1 (NNK1) of Saccharomyces cerevisiae (strain ATCC 204508 / S288c) (Baker's yeast).